The sequence spans 555 residues: Urocanate hydratase (555 aa).

NAD(+) contacts are provided by residues 52–53, glutamine 130, 176–178, glutamate 196, arginine 201, 242–243, 263–267, 272–273, and tyrosine 321; these read GG, GMG, NA, QTSAH, and YL. Cysteine 409 is a catalytic residue. Position 491 (glycine 491) interacts with NAD(+).

The protein belongs to the urocanase family. It depends on NAD(+) as a cofactor.

Its subcellular location is the cytoplasm. It catalyses the reaction 4-imidazolone-5-propanoate = trans-urocanate + H2O. It functions in the pathway amino-acid degradation; L-histidine degradation into L-glutamate; N-formimidoyl-L-glutamate from L-histidine: step 2/3. Catalyzes the conversion of urocanate to 4-imidazolone-5-propionate. The sequence is that of Urocanate hydratase from Nocardioides sp. (strain ATCC BAA-499 / JS614).